The primary structure comprises 166 residues: Large ribosomal subunit protein uL10 (166 aa).

Belongs to the universal ribosomal protein uL10 family. In terms of assembly, part of the ribosomal stalk of the 50S ribosomal subunit. The N-terminus interacts with L11 and the large rRNA to form the base of the stalk. The C-terminus forms an elongated spine to which L12 dimers bind in a sequential fashion forming a multimeric L10(L12)X complex.

In terms of biological role, forms part of the ribosomal stalk, playing a central role in the interaction of the ribosome with GTP-bound translation factors. The sequence is that of Large ribosomal subunit protein uL10 from Hydrogenovibrio crunogenus (strain DSM 25203 / XCL-2) (Thiomicrospira crunogena).